A 791-amino-acid chain; its full sequence is uncharacterized protein (791 aa).

4 helical membrane passes run 104 to 124, 131 to 151, 177 to 197, and 226 to 246; these read MWIL…FFLM, IAAI…YYII, ACLY…TLII, and WSGL…PSVL. The N-linked (GlcNAc...) asparagine glycan is linked to N265. Helical transmembrane passes span 274 to 294, 309 to 329, 346 to 366, 421 to 441, 471 to 491, 501 to 521, 533 to 553, and 583 to 603; these read FFIV…IFPA, SAVL…PLTL, WATC…LPGL, FIIN…SFFL, VHWG…FAFT, SYGF…LSLI, AFFE…LLYF, and LVAA…SAVT. The N-linked (GlcNAc...) asparagine glycan is linked to N621. The next 3 helical transmembrane spans lie at 653 to 673, 697 to 717, and 733 to 753; these read FVMW…LLQI, SVTG…NYLI, and AAAM…CVVY. A glycan (N-linked (GlcNAc...) asparagine) is linked at N759.

This sequence belongs to the oligopeptide OPT transporter family.

Its subcellular location is the membrane. This is an uncharacterized protein from Schizosaccharomyces pombe (strain 972 / ATCC 24843) (Fission yeast).